Consider the following 316-residue polypeptide: Spermidine synthase (316 aa).

The PABS domain maps to 25–262 (PGWFSEISPM…GVIGFMLCST (238 aa)). Gln-56 contacts S-adenosyl 3-(methylsulfanyl)propylamine. Tyr-86 serves as a coordination point for putrescine. S-adenosyl 3-(methylsulfanyl)propylamine-binding positions include Gln-87, Asp-111, Glu-131, 162–163 (DG), and Asp-181. Residue Asp-181 is the Proton acceptor of the active site. Residues 181 to 184 (DSSD) and Tyr-250 contribute to the putrescine site.

Belongs to the spermidine/spermine synthase family.

It catalyses the reaction S-adenosyl 3-(methylsulfanyl)propylamine + putrescine = S-methyl-5'-thioadenosine + spermidine + H(+). Its pathway is amine and polyamine biosynthesis; spermidine biosynthesis; spermidine from putrescine: step 1/1. In Coffea arabica (Arabian coffee), this protein is Spermidine synthase.